The sequence spans 384 residues: Dual specificity protein phosphatase 5 (384 aa).

The Rhodanese domain maps to 19-141 (AAARCVVLDC…FYSEYPECCV (123 aa)). The Nuclear localization signal signature appears at 53-74 (RRARGGAVSARYVLPDEAARAR). In terms of domain architecture, Tyrosine-protein phosphatase spans 178-319 (GPVEILPFLY…LLQYESEILP (142 aa)). Cys263 functions as the Phosphocysteine intermediate in the catalytic mechanism.

It belongs to the protein-tyrosine phosphatase family. Non-receptor class dual specificity subfamily.

It is found in the nucleus. It catalyses the reaction O-phospho-L-tyrosyl-[protein] + H2O = L-tyrosyl-[protein] + phosphate. The catalysed reaction is O-phospho-L-seryl-[protein] + H2O = L-seryl-[protein] + phosphate. It carries out the reaction O-phospho-L-threonyl-[protein] + H2O = L-threonyl-[protein] + phosphate. Functionally, dual specificity protein phosphatase; active with phosphotyrosine, phosphoserine and phosphothreonine residues. The highest relative activity is toward ERK1. The chain is Dual specificity protein phosphatase 5 (DUSP5) from Homo sapiens (Human).